We begin with the raw amino-acid sequence, 95 residues long: FXYD domain-containing ion transport regulator 6 (95 aa).

A signal peptide spans 1–18; that stretch reads MELVLVFLCSLLAPMVLA. The Extracellular portion of the chain corresponds to 19-35; the sequence is STAEKEKEMDPFHYDYQ. A helical transmembrane segment spans residues 36–58; it reads TLRIGGLVFAVVLFSVGILLILS. Over 59–95 the chain is Cytoplasmic; that stretch reads RRCKCSFNQKPRAPGDEEAQVENLITANATEPQKAEN.

The protein belongs to the FXYD family. As to quaternary structure, regulatory subunit of the sodium/potassium-transporting ATPase which is composed of a catalytic alpha subunit, a non-catalytic beta subunit and an additional regulatory subunit. The regulatory subunit, a member of the FXYD protein family, modulates the enzymatic activity in a tissue- and isoform-specific way by changing affinities of the Na+/K+-ATPase toward Na(+), K(+) or ATP.

It is found in the cell membrane. In terms of biological role, associates with and regulates the activity of the sodium/potassium-transporting ATPase (NKA) which catalyzes the hydrolysis of ATP coupled with the exchange of Na(+) and K(+) ions across the plasma membrane. Reduces the apparent affinity for intracellular Na(+) with no change in the apparent affinity for extracellular K(+). In addition to modulating NKA kinetics, may also function as a regulator of NKA localization to the plasma membrane. This Macaca fascicularis (Crab-eating macaque) protein is FXYD domain-containing ion transport regulator 6 (FXYD6).